The sequence spans 257 residues: Transmembrane protein 101 (257 aa).

The next 8 helical transmembrane spans lie at 21–40 (VLLTRCPFWGCFSQLMLYAE), 52–72 (VPYLYFDMGAAVLCASFMSFG), 77–97 (WFALGAALQLAISTYAAYIGG), 110–130 (YSRTVAIIGGFLVLASGAGEL), 139–159 (SLQSTGQVFLGIYLICVAYSL), 182–202 (LFFVLYGILALAFLSGYYVTL), 206–226 (ILAVLLPPVMLLIDGNVAYWH), and 233–253 (FWNQMKLLGESVGIFGTAVIL).

It is found in the membrane. Its function is as follows. May activate NF-kappa-B signaling pathways. The polypeptide is Transmembrane protein 101 (TMEM101) (Homo sapiens (Human)).